A 197-amino-acid chain; its full sequence is Recombination protein RecR (197 aa).

The segment at 57-72 adopts a C4-type zinc-finger fold; the sequence is CSVCFGITEDDPCHLC. In terms of domain architecture, Toprim spans 79–174; that stretch reads TTICVVEEPQ…RVTRLAHGIP (96 aa).

The protein belongs to the RecR family.

Functionally, may play a role in DNA repair. It seems to be involved in an RecBC-independent recombinational process of DNA repair. It may act with RecF and RecO. This Geotalea daltonii (strain DSM 22248 / JCM 15807 / FRC-32) (Geobacter daltonii) protein is Recombination protein RecR.